The sequence spans 356 residues: UDP-N-acetylglucosamine--N-acetylmuramyl-(pentapeptide) pyrophosphoryl-undecaprenol N-acetylglucosamine transferase (356 aa).

UDP-N-acetyl-alpha-D-glucosamine-binding positions include 11 to 13 (TGG), Asn117, Arg160, Ser188, and Gln290.

The protein belongs to the glycosyltransferase 28 family. MurG subfamily.

The protein resides in the cell inner membrane. The enzyme catalyses di-trans,octa-cis-undecaprenyl diphospho-N-acetyl-alpha-D-muramoyl-L-alanyl-D-glutamyl-meso-2,6-diaminopimeloyl-D-alanyl-D-alanine + UDP-N-acetyl-alpha-D-glucosamine = di-trans,octa-cis-undecaprenyl diphospho-[N-acetyl-alpha-D-glucosaminyl-(1-&gt;4)]-N-acetyl-alpha-D-muramoyl-L-alanyl-D-glutamyl-meso-2,6-diaminopimeloyl-D-alanyl-D-alanine + UDP + H(+). Its pathway is cell wall biogenesis; peptidoglycan biosynthesis. Cell wall formation. Catalyzes the transfer of a GlcNAc subunit on undecaprenyl-pyrophosphoryl-MurNAc-pentapeptide (lipid intermediate I) to form undecaprenyl-pyrophosphoryl-MurNAc-(pentapeptide)GlcNAc (lipid intermediate II). In Rickettsia bellii (strain RML369-C), this protein is UDP-N-acetylglucosamine--N-acetylmuramyl-(pentapeptide) pyrophosphoryl-undecaprenol N-acetylglucosamine transferase.